Here is a 469-residue protein sequence, read N- to C-terminus: Putative dipeptidase MW1694 (469 aa).

A Zn(2+)-binding site is contributed by His-84. Asp-86 is an active-site residue. Asp-115 contacts Zn(2+). Glu-149 functions as the Proton acceptor in the catalytic mechanism. Residues Glu-150, Asp-173, and His-440 each contribute to the Zn(2+) site.

The protein belongs to the peptidase M20A family. Zn(2+) is required as a cofactor.

The polypeptide is Putative dipeptidase MW1694 (Staphylococcus aureus (strain MW2)).